The primary structure comprises 366 residues: Growth/differentiation factor 3 (366 aa).

Positions 1-22 (MQPYQRLLALGFLLLTLPWGQT) are cleaved as a signal peptide. A propeptide spanning residues 23 to 252 (SEFQDSDLLQ…HCHPSSRKRR (230 aa)) is cleaved from the precursor. N-linked (GlcNAc...) asparagine glycans are attached at residues N113 and N308. 3 cysteine pairs are disulfide-bonded: C266–C331, C295–C363, and C299–C365.

This sequence belongs to the TGF-beta family. In terms of assembly, homodimer. Heterodimer (Potential). But, in contrast to other members of this family, cannot be disulfide-linked. Post-translationally, synthesized as large precursor molecule that undergo proteolytic cleavage, releasing the pro-domain from the active, receptor binding, C-terminal region of the molecule. In terms of tissue distribution, primarily in adult bone marrow, spleen, thymus and adipose tissue.

The protein localises to the secreted. Its subcellular location is the cytoplasm. Functionally, growth factor involved in early embryonic development and adipose-tissue homeostasis. During embryogenesis controls formation of anterior visceral endoderm and mesoderm and the establishment of anterior-posterior identity through a receptor complex comprising the receptor ACVR1B and the coreceptor CRIPTO. Regulates adipose-tissue homeostasis and energy balance under nutrient overload in part by signaling through the receptor complex based on ACVR1C and CRIPTO. This chain is Growth/differentiation factor 3 (Gdf3), found in Mus musculus (Mouse).